Consider the following 385-residue polypeptide: Serpin-Z1 (385 aa).

Residues Gly-317–Lys-341 are RCL.

The protein belongs to the serpin family.

Its function is as follows. Probable serine protease inhibitor. In Arabidopsis thaliana (Mouse-ear cress), this protein is Serpin-Z1.